We begin with the raw amino-acid sequence, 289 residues long: Serine/threonine-protein phosphatase Pgam5, mitochondrial (289 aa).

The protein belongs to the phosphoglycerate mutase family. BPG-dependent PGAM subfamily. As to quaternary structure, interacts with Pk92B/ASK1.

Its subcellular location is the mitochondrion outer membrane. The enzyme catalyses O-phospho-L-seryl-[protein] + H2O = L-seryl-[protein] + phosphate. It carries out the reaction O-phospho-L-threonyl-[protein] + H2O = L-threonyl-[protein] + phosphate. Its function is as follows. Displays phosphatase activity for serine/threonine residues, and dephosphorylates and activates Pk92B kinase. Has apparently no phosphoglycerate mutase activity. In Drosophila mojavensis (Fruit fly), this protein is Serine/threonine-protein phosphatase Pgam5, mitochondrial.